Consider the following 806-residue polypeptide: Ent-atiserene synthase KSL4, chloroplastic (806 aa).

Residues 1 to 75 (MGIVALILIK…AKLFKKNEVC (75 aa)) constitute a chloroplast transit peptide. Residues 33–56 (ASLAGSGLPKTTPPKTASLQSHSP) form a disordered region. The span at 45–55 (PPKTASLQSHS) shows a compositional bias: polar residues. Aspartate 556, aspartate 560, asparagine 700, and glutamate 708 together coordinate Mg(2+). Positions 556 to 560 (DDLFD) match the DDXXD motif motif.

Belongs to the terpene synthase family. It depends on Mg(2+) as a cofactor. In terms of tissue distribution, highly expressed in leaves, and, at low levels, in roots, stems and flowers.

It is found in the plastid. It localises to the chloroplast. It catalyses the reaction ent-copalyl diphosphate = ent-atiserene + diphosphate. The protein operates within secondary metabolite biosynthesis; terpenoid biosynthesis. Its function is as follows. Involved in the biosynthesis of ent-kaurene diterpenoids natural products such as oridonin, miltiradiene, eriocalyxin B and nezukol, known to exhibit antitumor, anti-inflammatory and antibacterial activities. Catalyzes the conversion of ent-copalyl diphosphate (ent-CPP) to ent-atiserene. The chain is Ent-atiserene synthase KSL4, chloroplastic from Isodon rubescens (Rabdosia rubescens).